The following is a 95-amino-acid chain: MNLKPLSDRVIVKPAAAEEKTKGGLYIPDTGKEKPQYGEVVAVGAGKIADNGQLLEMQVKVGSKVLYGKYSGTEVSVEGEDYLIMRESDIFAILG.

This sequence belongs to the GroES chaperonin family. As to quaternary structure, heptamer of 7 subunits arranged in a ring. Interacts with the chaperonin GroEL.

It localises to the cytoplasm. Its function is as follows. Together with the chaperonin GroEL, plays an essential role in assisting protein folding. The GroEL-GroES system forms a nano-cage that allows encapsulation of the non-native substrate proteins and provides a physical environment optimized to promote and accelerate protein folding. GroES binds to the apical surface of the GroEL ring, thereby capping the opening of the GroEL channel. The polypeptide is Co-chaperonin GroES (Pelodictyon phaeoclathratiforme (strain DSM 5477 / BU-1)).